Reading from the N-terminus, the 419-residue chain is Histidine--tRNA ligase (419 aa).

It belongs to the class-II aminoacyl-tRNA synthetase family. As to quaternary structure, homodimer.

The protein resides in the cytoplasm. It carries out the reaction tRNA(His) + L-histidine + ATP = L-histidyl-tRNA(His) + AMP + diphosphate + H(+). The protein is Histidine--tRNA ligase of Desulforamulus reducens (strain ATCC BAA-1160 / DSM 100696 / MI-1) (Desulfotomaculum reducens).